The chain runs to 243 residues: uncharacterized protein (243 aa).

The helical transmembrane segment at Ile-55 to Val-75 threads the bilayer.

Its subcellular location is the membrane. This is an uncharacterized protein from Rickettsia prowazekii (strain Madrid E).